We begin with the raw amino-acid sequence, 168 residues long: Translationally-controlled tumor protein homolog (168 aa).

The 168-residue stretch at 1–168 (MLLYKDVISG…FKDGLVSEKF (168 aa)) folds into the TCTP domain. Residue serine 78 is modified to Phosphoserine.

It belongs to the TCTP family.

It is found in the cytoplasm. Functionally, involved in calcium binding and microtubule stabilization. May be a guanine nucleotide-free chaperone (GFC). This is Translationally-controlled tumor protein homolog (p23fy) from Schizosaccharomyces pombe (strain 972 / ATCC 24843) (Fission yeast).